A 146-amino-acid chain; its full sequence is Hemoglobin subunit beta (146 aa).

At V1 the chain carries N-acetylvaline. Residues 2–146 form the Globin domain; the sequence is HLTAEEKSAV…VANALAHKYH (145 aa). Position 12 is a phosphothreonine (T12). Position 59 is an N6-acetyllysine (K59). H63 serves as a coordination point for heme b. Position 82 is an N6-acetyllysine (K82). H92 is a binding site for heme b. S-nitrosocysteine is present on C93. N6-acetyllysine is present on K144.

The protein belongs to the globin family. Heterotetramer of two alpha chains and two beta chains. Red blood cells.

Involved in oxygen transport from the lung to the various peripheral tissues. The protein is Hemoglobin subunit beta (HBB) of Balaenoptera acutorostrata (Common minke whale).